A 603-amino-acid chain; its full sequence is Elongation factor 4 (603 aa).

The tr-type G domain occupies 7-191 (DNIRNFSIVA…AIVTRLPPPK (185 aa)). GTP-binding positions include 19-24 (DHGKST) and 138-141 (NKVD).

It belongs to the TRAFAC class translation factor GTPase superfamily. Classic translation factor GTPase family. LepA subfamily.

The protein localises to the cell inner membrane. It carries out the reaction GTP + H2O = GDP + phosphate + H(+). Required for accurate and efficient protein synthesis under certain stress conditions. May act as a fidelity factor of the translation reaction, by catalyzing a one-codon backward translocation of tRNAs on improperly translocated ribosomes. Back-translocation proceeds from a post-translocation (POST) complex to a pre-translocation (PRE) complex, thus giving elongation factor G a second chance to translocate the tRNAs correctly. Binds to ribosomes in a GTP-dependent manner. The sequence is that of Elongation factor 4 from Rhodopseudomonas palustris (strain BisA53).